The following is a 406-amino-acid chain: Histone-lysine N-methyltransferase SUV39H2 (406 aa).

In terms of domain architecture, Chromo spans 43 to 101; the sequence is YEVEYLCDYRIEKGVEKFFVKWKGWPESCNTWEPTRNLKCPTLLKQFYSDLYNYFCALK. Positions 185 to 243 constitute a Pre-SET domain; sequence VGCDCSDCFKGKCCPTEAGVLFAYNEHRQIKIPPGRPIYECNSRCKCGPDCPNRVVQKG. Residues Cys-187, Cys-189, Cys-192, Cys-197, Cys-198, Cys-225, Cys-229, Cys-231, and Cys-235 each contribute to the Zn(2+) site. Residues 246–369 enclose the SET domain; sequence YSLCIFRTDN…AGEELTFDYQ (124 aa). Residues 257–259, Tyr-300, and 326–327 each bind S-adenosyl-L-methionine; these read RGW and NH. Residues Cys-329, Cys-394, Cys-396, and Cys-401 each coordinate Zn(2+). The Post-SET domain occupies 390 to 406; it reads VRIACKCGAATCRGYLN.

It belongs to the class V-like SAM-binding methyltransferase superfamily. Histone-lysine methyltransferase family. Suvar3-9 subfamily.

Its subcellular location is the nucleus. It is found in the chromosome. It localises to the centromere. It carries out the reaction L-lysyl(9)-[histone H3] + 3 S-adenosyl-L-methionine = N(6),N(6),N(6)-trimethyl-L-lysyl(9)-[histone H3] + 3 S-adenosyl-L-homocysteine + 3 H(+). Functionally, histone methyltransferase that specifically trimethylates 'Lys-9' of histone H3 using monomethylated H3 'Lys-9' as substrate. H3 'Lys-9' trimethylation represents a specific tag for epigenetic transcriptional repression by recruiting HP1 (CBX1, CBX3 and/or CBX5) proteins to methylated histones. Mainly functions in heterochromatin regions, thereby playing a central role in the establishment of constitutive heterochromatin at pericentric and telomere regions. H3 'Lys-9' trimethylation is also required to direct DNA methylation at pericentric repeats. SUV39H1 is targeted to histone H3 via its interaction with RB1 and is involved in many processes. This is Histone-lysine N-methyltransferase SUV39H2 (suv39h2) from Xenopus tropicalis (Western clawed frog).